The following is a 295-amino-acid chain: Dipeptide transport system permease protein DppC (295 aa).

Transmembrane regions (helical) follow at residues 27–47 (ALIG…APYI), 97–117 (VFAG…LGLI), 132–152 (LIDI…VSIL), 156–178 (LANA…TRAA), 202–222 (MFIV…TMGI), 226–246 (ILEL…TPEL), and 262–282 (WLVT…NLMG). The region spanning 93 to 282 (TRISVFAGFI…SLVLAFNLMG (190 aa)) is the ABC transmembrane type-1 domain.

It belongs to the binding-protein-dependent transport system permease family. OppBC subfamily.

It localises to the cell inner membrane. Its function is as follows. Part of the ABC transporter DppBCDF involved in dipeptide transport. Responsible for the translocation of the substrate across the membrane. In Haemophilus influenzae (strain ATCC 51907 / DSM 11121 / KW20 / Rd), this protein is Dipeptide transport system permease protein DppC (dppC).